Reading from the N-terminus, the 94-residue chain is Co-chaperonin GroES (94 aa).

This sequence belongs to the GroES chaperonin family. Heptamer of 7 subunits arranged in a ring. Interacts with the chaperonin GroEL.

It localises to the cytoplasm. In terms of biological role, together with the chaperonin GroEL, plays an essential role in assisting protein folding. The GroEL-GroES system forms a nano-cage that allows encapsulation of the non-native substrate proteins and provides a physical environment optimized to promote and accelerate protein folding. GroES binds to the apical surface of the GroEL ring, thereby capping the opening of the GroEL channel. The protein is Co-chaperonin GroES of Lactococcus lactis subsp. cremoris (strain SK11).